The following is a 305-amino-acid chain: MDETSPRSIDIESLIPNLMIIIFGLVGLTGNAIVLWLLGFCLHRNAFLVYILNLALADFLFLLCHFINSAMFLLKVPIPNGIFVYCFYTIKMVLYITGLSMLSAISTERCLSVLCPIWYHCRRPEHTSTVMCAVIWIFSVLICILKEYFCDFFGTKLGNYYVCQASNFFMGAYLMFLFVVLCLSTLALLARLFCGAEKMKFTRLFVTIMLTILVFLLCGLPWGFFWFLLIWIKGGFSVLDYRLYLASIVLTVVNSCANPIIYFFVGSFRHRLKHQTLKMVLQSALQDTPETHENMVEMSRIKAEQ.

The Extracellular portion of the chain corresponds to 1-17 (MDETSPRSIDIESLIPN). Residues 18–38 (LMIIIFGLVGLTGNAIVLWLL) traverse the membrane as a helical segment. Topologically, residues 39 to 46 (GFCLHRNA) are cytoplasmic. Residues 47–67 (FLVYILNLALADFLFLLCHFI) traverse the membrane as a helical segment. At 68–81 (NSAMFLLKVPIPNG) the chain is on the extracellular side. Residues 82-102 (IFVYCFYTIKMVLYITGLSML) traverse the membrane as a helical segment. Topologically, residues 103-129 (SAISTERCLSVLCPIWYHCRRPEHTST) are cytoplasmic. A helical transmembrane segment spans residues 130-150 (VMCAVIWIFSVLICILKEYFC). Residues 151–167 (DFFGTKLGNYYVCQASN) are Extracellular-facing. The chain crosses the membrane as a helical span at residues 168–188 (FFMGAYLMFLFVVLCLSTLAL). At 189–211 (LARLFCGAEKMKFTRLFVTIMLT) the chain is on the cytoplasmic side. The chain crosses the membrane as a helical span at residues 212-232 (ILVFLLCGLPWGFFWFLLIWI). Over 233 to 244 (KGGFSVLDYRLY) the chain is Extracellular. The helical transmembrane segment at 245 to 265 (LASIVLTVVNSCANPIIYFFV) threads the bilayer. Topologically, residues 266–305 (GSFRHRLKHQTLKMVLQSALQDTPETHENMVEMSRIKAEQ) are cytoplasmic.

This sequence belongs to the G-protein coupled receptor 1 family. Mas subfamily. As to expression, expressed in a subset of sensory neurons that includes nociceptors. Expressed in the subclass of non-peptidergic sensory neurons that are IB4(+) and VR1(-).

It is found in the cell membrane. Functionally, orphan receptor. May be a receptor for RFamide-family neuropeptides such as NPFF and NPAF, which are analgesic in vivo. May regulate nociceptor function and/or development, including the sensation or modulation of pain. The polypeptide is Mas-related G-protein coupled receptor member A7 (Mrgpra7) (Mus musculus (Mouse)).